Reading from the N-terminus, the 195-residue chain is Dephospho-CoA kinase (195 aa).

Residues Ile3–Asn195 enclose the DPCK domain. Ala11–Thr16 contacts ATP.

Belongs to the CoaE family.

Its subcellular location is the cytoplasm. It catalyses the reaction 3'-dephospho-CoA + ATP = ADP + CoA + H(+). It participates in cofactor biosynthesis; coenzyme A biosynthesis; CoA from (R)-pantothenate: step 5/5. Functionally, catalyzes the phosphorylation of the 3'-hydroxyl group of dephosphocoenzyme A to form coenzyme A. The protein is Dephospho-CoA kinase of Bartonella henselae (strain ATCC 49882 / DSM 28221 / CCUG 30454 / Houston 1) (Rochalimaea henselae).